The sequence spans 466 residues: Argininosuccinate lyase (466 aa).

Belongs to the lyase 1 family. Argininosuccinate lyase subfamily.

It is found in the cytoplasm. It carries out the reaction 2-(N(omega)-L-arginino)succinate = fumarate + L-arginine. It functions in the pathway amino-acid biosynthesis; L-arginine biosynthesis; L-arginine from L-ornithine and carbamoyl phosphate: step 3/3. The chain is Argininosuccinate lyase from Brucella abortus (strain S19).